A 301-amino-acid chain; its full sequence is Inactive C-alpha-formylglycine-generating enzyme 2 (301 aa).

A signal peptide spans 1-25 (MGISLSPLLTVLSLLSGRWLELGNG). Cys156 and Cys290 are joined by a disulfide. N-linked (GlcNAc...) asparagine glycosylation occurs at Asn191. Positions 194, 195, 208, 210, 229, 232, 234, and 236 each coordinate Ca(2+). Polar residues predominate over residues 274-284 (RMGNTPDSASD). A disordered region spans residues 274–301 (RMGNTPDSASDNLGFRCASGAGRPPGEL). A Non-canonical ER retention motif motif is present at residues 298–301 (PGEL).

The protein belongs to the sulfatase-modifying factor family. In terms of assembly, homodimer and heterodimer with SUMF1.

The protein localises to the endoplasmic reticulum lumen. Functionally, lacks formylglycine generating activity and is unable to convert newly synthesized inactive sulfatases to their active form. Inhibits the activation of sulfatases by SUMF1. This Bos taurus (Bovine) protein is Inactive C-alpha-formylglycine-generating enzyme 2.